A 515-amino-acid polypeptide reads, in one-letter code: Bifunctional purine biosynthesis protein PurH (515 aa).

The MGS-like domain maps to 1 to 145; the sequence is MTKRVLISVS…KNHASVTVVV (145 aa).

The protein belongs to the PurH family.

It carries out the reaction (6R)-10-formyltetrahydrofolate + 5-amino-1-(5-phospho-beta-D-ribosyl)imidazole-4-carboxamide = 5-formamido-1-(5-phospho-D-ribosyl)imidazole-4-carboxamide + (6S)-5,6,7,8-tetrahydrofolate. The catalysed reaction is IMP + H2O = 5-formamido-1-(5-phospho-D-ribosyl)imidazole-4-carboxamide. It participates in purine metabolism; IMP biosynthesis via de novo pathway; 5-formamido-1-(5-phospho-D-ribosyl)imidazole-4-carboxamide from 5-amino-1-(5-phospho-D-ribosyl)imidazole-4-carboxamide (10-formyl THF route): step 1/1. It functions in the pathway purine metabolism; IMP biosynthesis via de novo pathway; IMP from 5-formamido-1-(5-phospho-D-ribosyl)imidazole-4-carboxamide: step 1/1. The protein is Bifunctional purine biosynthesis protein PurH of Streptococcus pneumoniae (strain Taiwan19F-14).